The following is a 478-amino-acid chain: MTSGTVKCHFCKKDDSEDKGQPIWVGCEFCDGWCHLTCVPIQFVVPKLENPSQLLAFKEKHVESFKCTLHDESKCALLKLNGVSVGTEDIAFTKRNRLRNKRPIDYIALNEGNDKRLKHEHPHTQAFLACFEKWKDPKAISSSELESDFQIIKVPLRVSDPADSGMYVISANELGLVDSKDHVKLNVEYLTKIMGDDYPLDVMDVQTQMNEKWTLSQWNEYYSHTSPSDRDRIRNVISLEVSHVESFKDGIRRPNAVNNNDLVDIVWNFGRTETDIERPKVTKYILMSVGNAYTDFHLDFAGTSVYYNVISGSKKFILFPPTDYNLKKYREWCDNDNQNDIFLGDQLEAGIAMELTEGNLFMIPCGYIHAVYTPEDSFIVGGNFLTLRDITTQLNVVEIEHQTKVPKKFTFPQFESVMGKTCEWLLNSDHIQSISSEDIENLVKYLSSSNIKYKPINYQSKKELITELKNKIIKFEHT.

The PHD-type zinc-finger motif lies at 6–70 (VKCHFCKKDD…HVESFKCTLH (65 aa)). The JmjC domain occupies 242–401 (SHVESFKDGI…TQLNVVEIEH (160 aa)). Threonine 294 is a binding site for substrate. Residues histidine 297 and aspartate 299 each contribute to the Fe cation site. Lysine 314 contacts substrate. Residue histidine 369 participates in Fe cation binding.

The protein belongs to the JHDM1 histone demethylase family. It depends on Fe(2+) as a cofactor.

The protein resides in the nucleus. The catalysed reaction is N(6),N(6)-dimethyl-L-lysyl(36)-[histone H3] + 2 2-oxoglutarate + 2 O2 = L-lysyl(36)-[histone H3] + 2 formaldehyde + 2 succinate + 2 CO2. Its function is as follows. Histone demethylase that specifically demethylates 'Lys-36' of histone H3, thereby playing a central role in histone code. In Kluyveromyces lactis (strain ATCC 8585 / CBS 2359 / DSM 70799 / NBRC 1267 / NRRL Y-1140 / WM37) (Yeast), this protein is JmjC domain-containing histone demethylation protein 1 (JHD1).